The sequence spans 248 residues: tRNA (guanine-N(1)-)-methyltransferase (248 aa).

S-adenosyl-L-methionine is bound by residues Gly-113 and 133–138 (VGDYVL).

This sequence belongs to the RNA methyltransferase TrmD family. As to quaternary structure, homodimer.

It localises to the cytoplasm. It catalyses the reaction guanosine(37) in tRNA + S-adenosyl-L-methionine = N(1)-methylguanosine(37) in tRNA + S-adenosyl-L-homocysteine + H(+). Its function is as follows. Specifically methylates guanosine-37 in various tRNAs. This is tRNA (guanine-N(1)-)-methyltransferase from Shewanella sp. (strain W3-18-1).